The following is a 140-amino-acid chain: Ribonuclease P protein component (140 aa).

A disordered region spans residues 33-54 (RALKPSSAKKSSLDTAAKTQPA).

This sequence belongs to the RnpA family. Consists of a catalytic RNA component (M1 or rnpB) and a protein subunit.

The catalysed reaction is Endonucleolytic cleavage of RNA, removing 5'-extranucleotides from tRNA precursor.. In terms of biological role, RNaseP catalyzes the removal of the 5'-leader sequence from pre-tRNA to produce the mature 5'-terminus. It can also cleave other RNA substrates such as 4.5S RNA. The protein component plays an auxiliary but essential role in vivo by binding to the 5'-leader sequence and broadening the substrate specificity of the ribozyme. This chain is Ribonuclease P protein component, found in Trichormus variabilis (strain ATCC 29413 / PCC 7937) (Anabaena variabilis).